Reading from the N-terminus, the 520-residue chain is Bifunctional dihydrofolate reductase-thymidylate synthase (520 aa).

Residues 26–229 (AFSIVVALDM…LEFEICKYVP (204 aa)) form the DHFR domain. Residue Val30 participates in substrate binding. NADP(+) contacts are provided by residues Ala32 and 38–44 (GIGDGES). Substrate is bound at residue Asp52. NADP(+) is bound by residues 81 to 83 (RKT), 102 to 105 (LSSK), and 157 to 164 (GGAQVYAD). Residues Tyr162 and Thr180 each coordinate substrate. Residues 234 to 520 (ERQYLELIDR…HPAIKMEMAV (287 aa)) form a thymidylate synthase region. Arg254 is a dUMP binding site. Cys400 is an active-site residue. Residues His401, 421 to 425 (QRSCD), Asn433, and 463 to 465 (HVY) contribute to the dUMP site.

In the N-terminal section; belongs to the dihydrofolate reductase family. The protein in the C-terminal section; belongs to the thymidylate synthase family.

It carries out the reaction (6S)-5,6,7,8-tetrahydrofolate + NADP(+) = 7,8-dihydrofolate + NADPH + H(+). It catalyses the reaction dUMP + (6R)-5,10-methylene-5,6,7,8-tetrahydrofolate = 7,8-dihydrofolate + dTMP. Its pathway is cofactor biosynthesis; tetrahydrofolate biosynthesis; 5,6,7,8-tetrahydrofolate from 7,8-dihydrofolate: step 1/1. Functionally, bifunctional enzyme. Involved in de novo dTMP biosynthesis. Key enzyme in folate metabolism. Catalyzes an essential reaction for de novo glycine and purine synthesis, DNA precursor synthesis, and for the conversion of dUMP to dTMP. This chain is Bifunctional dihydrofolate reductase-thymidylate synthase, found in Leishmania major.